A 242-amino-acid polypeptide reads, in one-letter code: uncharacterized protein (242 aa).

A Response regulatory domain is found at 3-116 (TALVIDDEQF…RLNKTVKRLN (114 aa)). At aspartate 54 the chain carries 4-aspartylphosphate. Residues 139-240 (IPCIGHNRIV…LKVLKEMLGI (102 aa)) form the HTH LytTR-type domain.

This is an uncharacterized protein from Vibrio parahaemolyticus serotype O3:K6 (strain RIMD 2210633).